The following is a 355-amino-acid chain: Cobalt-precorrin-5B C(1)-methyltransferase (355 aa).

Belongs to the CbiD family.

It carries out the reaction Co-precorrin-5B + S-adenosyl-L-methionine = Co-precorrin-6A + S-adenosyl-L-homocysteine. Its pathway is cofactor biosynthesis; adenosylcobalamin biosynthesis; cob(II)yrinate a,c-diamide from sirohydrochlorin (anaerobic route): step 6/10. Its function is as follows. Catalyzes the methylation of C-1 in cobalt-precorrin-5B to form cobalt-precorrin-6A. The polypeptide is Cobalt-precorrin-5B C(1)-methyltransferase (Parasynechococcus marenigrum (strain WH8102)).